Here is a 199-residue protein sequence, read N- to C-terminus: Recombination protein RecR (199 aa).

The segment at cysteine 56–cysteine 71 adopts a C4-type zinc-finger fold. A Toprim domain is found at threonine 79 to proline 174.

It belongs to the RecR family.

Functionally, may play a role in DNA repair. It seems to be involved in an RecBC-independent recombinational process of DNA repair. It may act with RecF and RecO. This chain is Recombination protein RecR, found in Acidothermus cellulolyticus (strain ATCC 43068 / DSM 8971 / 11B).